A 105-amino-acid polypeptide reads, in one-letter code: Late embryogenesis abundant protein Lea5-A (105 aa).

Belongs to the LEA type 3 family.

The protein is Late embryogenesis abundant protein Lea5-A (LEA5-A) of Gossypium hirsutum (Upland cotton).